The sequence spans 171 residues: 3-hydroxydecanoyl-[acyl-carrier-protein] dehydratase (171 aa).

Histidine 71 is a catalytic residue.

It belongs to the thioester dehydratase family. FabA subfamily. As to quaternary structure, homodimer.

Its subcellular location is the cytoplasm. The enzyme catalyses a (3R)-hydroxyacyl-[ACP] = a (2E)-enoyl-[ACP] + H2O. It catalyses the reaction (3R)-hydroxydecanoyl-[ACP] = (2E)-decenoyl-[ACP] + H2O. The catalysed reaction is (2E)-decenoyl-[ACP] = (3Z)-decenoyl-[ACP]. The protein operates within lipid metabolism; fatty acid biosynthesis. Necessary for the introduction of cis unsaturation into fatty acids. Catalyzes the dehydration of (3R)-3-hydroxydecanoyl-ACP to E-(2)-decenoyl-ACP and then its isomerization to Z-(3)-decenoyl-ACP. Can catalyze the dehydratase reaction for beta-hydroxyacyl-ACPs with saturated chain lengths up to 16:0, being most active on intermediate chain length. The sequence is that of 3-hydroxydecanoyl-[acyl-carrier-protein] dehydratase from Rhizobium rhizogenes (strain K84 / ATCC BAA-868) (Agrobacterium radiobacter).